We begin with the raw amino-acid sequence, 62 residues long: UPF0434 protein RSc2531 (62 aa).

It belongs to the UPF0434 family.

This Ralstonia nicotianae (strain ATCC BAA-1114 / GMI1000) (Ralstonia solanacearum) protein is UPF0434 protein RSc2531.